We begin with the raw amino-acid sequence, 642 residues long: Threonine--tRNA ligase (642 aa).

Residues 1 to 65 enclose the TGS domain; sequence MSDIITVTLP…DEDVKLQIFT (65 aa). The tract at residues 248–541 is catalytic; that stretch reads DHRKLGKELD…LIEHFAGAFP (294 aa). Zn(2+)-binding residues include cysteine 342, histidine 393, and histidine 518.

Belongs to the class-II aminoacyl-tRNA synthetase family. Homodimer. Zn(2+) serves as cofactor.

It localises to the cytoplasm. It catalyses the reaction tRNA(Thr) + L-threonine + ATP = L-threonyl-tRNA(Thr) + AMP + diphosphate + H(+). Its function is as follows. Catalyzes the attachment of threonine to tRNA(Thr) in a two-step reaction: L-threonine is first activated by ATP to form Thr-AMP and then transferred to the acceptor end of tRNA(Thr). Also edits incorrectly charged L-seryl-tRNA(Thr). The chain is Threonine--tRNA ligase from Myxococcus xanthus (strain DK1622).